Reading from the N-terminus, the 166-residue chain is Large ribosomal subunit protein uL11 (166 aa).

Arg67 is subject to N5-methylarginine.

The protein belongs to the universal ribosomal protein uL11 family.

The polypeptide is Large ribosomal subunit protein uL11 (RPL12) (Encephalitozoon cuniculi (strain GB-M1) (Microsporidian parasite)).